The sequence spans 153 residues: SsrA-binding protein (153 aa).

Basic and acidic residues predominate over residues 132–142 (ALKRKEAEREA). The tract at residues 132-153 (ALKRKEAEREAQSAMKRYAKGY) is disordered.

This sequence belongs to the SmpB family.

It localises to the cytoplasm. Required for rescue of stalled ribosomes mediated by trans-translation. Binds to transfer-messenger RNA (tmRNA), required for stable association of tmRNA with ribosomes. tmRNA and SmpB together mimic tRNA shape, replacing the anticodon stem-loop with SmpB. tmRNA is encoded by the ssrA gene; the 2 termini fold to resemble tRNA(Ala) and it encodes a 'tag peptide', a short internal open reading frame. During trans-translation Ala-aminoacylated tmRNA acts like a tRNA, entering the A-site of stalled ribosomes, displacing the stalled mRNA. The ribosome then switches to translate the ORF on the tmRNA; the nascent peptide is terminated with the 'tag peptide' encoded by the tmRNA and targeted for degradation. The ribosome is freed to recommence translation, which seems to be the essential function of trans-translation. The sequence is that of SsrA-binding protein from Campylobacter hominis (strain ATCC BAA-381 / DSM 21671 / CCUG 45161 / LMG 19568 / NCTC 13146 / CH001A).